A 237-amino-acid chain; its full sequence is Ribosomal RNA small subunit methyltransferase G (237 aa).

S-adenosyl-L-methionine is bound by residues Gly-78, Phe-83, 129 to 130, and Arg-148; that span reads AE.

Belongs to the methyltransferase superfamily. RNA methyltransferase RsmG family.

It localises to the cytoplasm. In terms of biological role, specifically methylates the N7 position of a guanine in 16S rRNA. This chain is Ribosomal RNA small subunit methyltransferase G, found in Streptococcus pyogenes serotype M12 (strain MGAS9429).